A 415-amino-acid polypeptide reads, in one-letter code: MAMSSRVIEQAIAARSAATVLRRLRRIDKDDLLAAMGIGLRKGVDEILAANGADVDRGRDAGMDEALLDRLTLTPERIEGMAVGLEGVAHLDDPVGEVVRGWHTPLGVKIEQVRVPIGVIGIIYEARPNVTSDAAGICLKSGNACLLRGSSSALESNRAVIAAMRSRLPEEIREAVQLVEGGHEVTDELMTARGYVDLLIPRGGAGLINAVVTGAKVPVIQTGTGNCHLVIDVSADVEMAVNIAVNAKTQRPSVCNAIETVLVHRGIADSAVRPLVDAMSERGVTVHGDEESIRLDPRIVPAAPDEYDNEYLSLDLALRIVDDLEEAVDHIAKHGSGHSETIVTKSMSSQEFFASSVDAAAVLVNCSSRFVDGGEFGFGAEIGISTQKLHARGPMGLREMTTTTYVLRGDGQTRP.

Belongs to the gamma-glutamyl phosphate reductase family.

Its subcellular location is the cytoplasm. It carries out the reaction L-glutamate 5-semialdehyde + phosphate + NADP(+) = L-glutamyl 5-phosphate + NADPH + H(+). It participates in amino-acid biosynthesis; L-proline biosynthesis; L-glutamate 5-semialdehyde from L-glutamate: step 2/2. Catalyzes the NADPH-dependent reduction of L-glutamate 5-phosphate into L-glutamate 5-semialdehyde and phosphate. The product spontaneously undergoes cyclization to form 1-pyrroline-5-carboxylate. The sequence is that of Gamma-glutamyl phosphate reductase from Cutibacterium acnes (strain DSM 16379 / KPA171202) (Propionibacterium acnes).